A 44-amino-acid polypeptide reads, in one-letter code: Thymosin beta-4, Y-chromosomal (44 aa).

A disordered region spans residues 1–44; sequence MSDKPGMAEIEKFDKSKLKKTETQEKNPLSSKETIEQERQAGES. Basic and acidic residues-rich tracts occupy residues 9 to 25 and 33 to 44; these read EIEK…ETQE and ETIEQERQAGES.

The protein belongs to the thymosin beta family. As to expression, ubiquitous.

It localises to the cytoplasm. The protein resides in the cytoskeleton. Functionally, plays an important role in the organization of the cytoskeleton. Binds to and sequesters actin monomers (G actin) and therefore inhibits actin polymerization. The polypeptide is Thymosin beta-4, Y-chromosomal (TMSB4Y) (Homo sapiens (Human)).